A 362-amino-acid chain; its full sequence is Chorismate synthase (362 aa).

NADP(+)-binding residues include Arg-47 and Arg-53. FMN contacts are provided by residues 124 to 126 (RSS), Gly-285, 300 to 304 (KPTAT), and Arg-326.

It belongs to the chorismate synthase family. As to quaternary structure, homotetramer. FMNH2 serves as cofactor.

It carries out the reaction 5-O-(1-carboxyvinyl)-3-phosphoshikimate = chorismate + phosphate. It functions in the pathway metabolic intermediate biosynthesis; chorismate biosynthesis; chorismate from D-erythrose 4-phosphate and phosphoenolpyruvate: step 7/7. Functionally, catalyzes the anti-1,4-elimination of the C-3 phosphate and the C-6 proR hydrogen from 5-enolpyruvylshikimate-3-phosphate (EPSP) to yield chorismate, which is the branch point compound that serves as the starting substrate for the three terminal pathways of aromatic amino acid biosynthesis. This reaction introduces a second double bond into the aromatic ring system. The protein is Chorismate synthase of Cyanothece sp. (strain PCC 7425 / ATCC 29141).